Consider the following 494-residue polypeptide: Ketol-acid reductoisomerase (NADP(+)) (494 aa).

Residues 14 to 208 (LDQLGRCRFM…GGHRAGCLES (195 aa)) form the KARI N-terminal Rossmann domain. NADP(+) is bound by residues 45–48 (CGAQ), Arg-68, Arg-76, Ser-78, and 108–110 (DKQ). Residue His-132 is part of the active site. Gly-158 contacts NADP(+). KARI C-terminal knotted domains lie at 209–344 (SFVA…NYPE) and 345–487 (TDVE…MTDM). Mg(2+)-binding residues include Asp-217, Glu-221, Glu-389, and Glu-393. Substrate is bound at residue Ser-414.

It belongs to the ketol-acid reductoisomerase family. It depends on Mg(2+) as a cofactor.

It carries out the reaction (2R)-2,3-dihydroxy-3-methylbutanoate + NADP(+) = (2S)-2-acetolactate + NADPH + H(+). The enzyme catalyses (2R,3R)-2,3-dihydroxy-3-methylpentanoate + NADP(+) = (S)-2-ethyl-2-hydroxy-3-oxobutanoate + NADPH + H(+). It participates in amino-acid biosynthesis; L-isoleucine biosynthesis; L-isoleucine from 2-oxobutanoate: step 2/4. Its pathway is amino-acid biosynthesis; L-valine biosynthesis; L-valine from pyruvate: step 2/4. Its function is as follows. Involved in the biosynthesis of branched-chain amino acids (BCAA). Catalyzes an alkyl-migration followed by a ketol-acid reduction of (S)-2-acetolactate (S2AL) to yield (R)-2,3-dihydroxy-isovalerate. In the isomerase reaction, S2AL is rearranged via a Mg-dependent methyl migration to produce 3-hydroxy-3-methyl-2-ketobutyrate (HMKB). In the reductase reaction, this 2-ketoacid undergoes a metal-dependent reduction by NADPH to yield (R)-2,3-dihydroxy-isovalerate. This chain is Ketol-acid reductoisomerase (NADP(+)), found in Vibrio parahaemolyticus serotype O3:K6 (strain RIMD 2210633).